A 347-amino-acid chain; its full sequence is MRALGAVVTLLLWGQLFAAELGNDAMDFEDDSCPKPPEIANGYVEHLVRYRCRQFYRLRTEGDGVYTLNDEKQWVNTAAGEKLPECEAVCGKPKHPVVQVQRIIGGSMDAKGSFPWQAKMISRHGLTTGATLISDQWLLTTAKNLFLNHSETASAKDIAPTLTLYVGKNQLVEIEKVVLHPNHSVVDIGLIKLKQRVLVTERVMPICLPSKDYVAPGRVGYLSGWGRNVNFRFTERFKYVMLPVADQDKCVVHYENSTVPEKKNFTSPVGVQPILNEHTFCVGLSRYQEDTCYGDAGSAFAIHDMEEDTWXAAGILSFDKSCAVAEYGVYVRATDLKDWVQETMAKK.

An N-terminal signal peptide occupies residues 1-18 (MRALGAVVTLLLWGQLFA). In terms of domain architecture, Sushi spans 31 to 88 (DSCPKPPEIANGYVEHLVRYRCRQFYRLRTEGDGVYTLNDEKQWVNTAAGEKLPECEA). 4 disulfide bridges follow: cysteine 52–cysteine 86, cysteine 90–cysteine 207, cysteine 250–cysteine 281, and cysteine 292–cysteine 322. In terms of domain architecture, Peptidase S1 spans 103–345 (IIGGSMDAKG…LKDWVQETMA (243 aa)). N-linked (GlcNAc...) asparagine glycans are attached at residues asparagine 148, asparagine 182, asparagine 256, and asparagine 264. The tract at residues 259-264 (VPEKKN) is interaction with CD163.

This sequence belongs to the peptidase S1 family. As to quaternary structure, tetramer of two alpha and two beta chains; disulfide-linked. The hemoglobin/haptoglobin complex is composed of a haptoglobin dimer bound to two hemoglobin alpha-beta dimers. Interacts with CD163. Interacts with ERGIC3. Expressed by the liver and secreted in plasma.

The protein resides in the secreted. In terms of biological role, as a result of hemolysis, hemoglobin is found to accumulate in the kidney and is secreted in the urine. Haptoglobin captures, and combines with free plasma hemoglobin to allow hepatic recycling of heme iron and to prevent kidney damage. Haptoglobin also acts as an antioxidant, has antibacterial activity and plays a role in modulating many aspects of the acute phase response. Hemoglobin/haptoglobin complexes are rapidly cleared by the macrophage CD163 scavenger receptor expressed on the surface of liver Kupfer cells through an endocytic lysosomal degradation pathway. The chain is Haptoglobin (Hp) from Mus saxicola (Brown spiny mouse).